A 470-amino-acid polypeptide reads, in one-letter code: Sorting nexin-17 (470 aa).

One can recognise a PX domain in the interval Met1 to Thr109. The a 1,2-diacyl-sn-glycero-3-phospho-(1D-myo-inositol-3-phosphate) site is built by Arg36, Ser38, Lys62, and Arg75. In terms of domain architecture, Ras-associating spans Glu115–Trp206. The tract at residues Glu115–Leu432 is FERM-like. Residues Gly270–Leu432 are PTB-like F3 module. Phosphoserine is present on residues Ser336, Ser407, Ser409, Ser415, Ser421, Ser437, and Ser440. The disordered stretch occupies residues Gly401 to Arg426. Residues Gly458–Leu470 are interacts with the retriever complex.

The protein belongs to the sorting nexin family. As to quaternary structure, monomer. Interacts with APP (via cytoplasmic YXNPXY motif). Interacts with KIF1B. Interacts with the C-termini of P-selectin, PTC, LDLR, VLDLR, LRP1 and LRP8. Interacts with KRIT1 (via N-terminus). Interacts with HRAS. Interacts with ITGB1 and ITGB5 (via NPxY motif). Interacts with CCDC22 and CCDC93; the interaction associates SNX17 with the CCC complex. Interacts (via C-terminus) with VPS26C and VPS35L; the interactions are direct and associate SNX17 with the retriever complex.

It is found in the cytoplasm. The protein resides in the early endosome. It localises to the cytoplasmic vesicle membrane. Its function is as follows. Critical regulator of endosomal recycling of numerous surface proteins, including integrins, signaling receptor and channels. Binds to NPxY sequences in the cytoplasmic tails of target cargos. Associates with retriever and CCC complexes to prevent lysosomal degradation and promote cell surface recycling of numerous cargos such as integrins ITGB1, ITGB5 and their associated alpha subunits. Also required for maintenance of normal cell surface levels of APP and LRP1. Interacts with membranes containing phosphatidylinositol 3-phosphate (PtdIns(3P)). This is Sorting nexin-17 (SNX17) from Homo sapiens (Human).